A 221-amino-acid polypeptide reads, in one-letter code: Transmembrane emp24 domain-containing protein 3 (221 aa).

The N-terminal stretch at 1–25 (MVHEAPHASSFQMLLQLLLLLLLRA) is a signal peptide. Over 28 to 184 (LRSAELTFEL…RAEDLNSRVS (157 aa)) the chain is Lumenal. Residues 42–124 (KQCFHEEVEQ…HKTVYFDFQV (83 aa)) form the GOLD domain. R103 carries the post-translational modification Dimethylated arginine. A helical transmembrane segment spans residues 185–205 (YWSVGETIALFVVSFSQVLLL). The Cytoplasmic portion of the chain corresponds to 206 to 221 (KSFFTEKRPVNRAVHS). The COPII vesicle coat-binding signature appears at 208–209 (FF). The COPI vesicle coat-binding signature appears at 208 to 221 (FFTEKRPVNRAVHS).

The protein belongs to the EMP24/GP25L family. Monomer in endoplasmic reticulum, endoplasmic reticulum-Golgi intermediate compartment and cis-Golgi network. Interacts (via C-terminus) with COPG1; the interaction involves dimeric TMED3; however, there are conflicting reports on the interaction. Interacts with GORASP1 and GORASP2.

The protein resides in the endoplasmic reticulum-Golgi intermediate compartment membrane. It is found in the golgi apparatus. Its subcellular location is the cis-Golgi network membrane. The protein localises to the golgi stack membrane. It localises to the endoplasmic reticulum membrane. The protein resides in the cytoplasmic vesicle. It is found in the COPI-coated vesicle membrane. Functionally, potential role in vesicular protein trafficking, mainly in the early secretory pathway. Contributes to the coupled localization of TMED2 and TMED10 in the cis-Golgi network. In Mus musculus (Mouse), this protein is Transmembrane emp24 domain-containing protein 3 (Tmed3).